The primary structure comprises 210 residues: Large ribosomal subunit protein uL3 (210 aa).

A disordered region spans residues 120–143 (FQGNIKKDGQSRGPMGHGSRYHRR).

It belongs to the universal ribosomal protein uL3 family. Part of the 50S ribosomal subunit. Forms a cluster with proteins L14 and L19.

Functionally, one of the primary rRNA binding proteins, it binds directly near the 3'-end of the 23S rRNA, where it nucleates assembly of the 50S subunit. The sequence is that of Large ribosomal subunit protein uL3 from Latilactobacillus sakei subsp. sakei (strain 23K) (Lactobacillus sakei subsp. sakei).